We begin with the raw amino-acid sequence, 574 residues long: 3-hydroxy-3-methylglutaryl-coenzyme A reductase 3 (574 aa).

Positions 1–30 are disordered; the sequence is MDVRRRPVKPLYPSEHISSGEPLKPHNQDS. Residues 41–61 form a helical membrane-spanning segment; sequence PLYLTNGLFFTMFFSVMYFLL. Asn-78 is a glycosylation site (N-linked (GlcNAc...) asparagine). Residues 83 to 103 traverse the membrane as a helical segment; sequence VAMVSLIASVIYLLGFFGIGF. Residues 104 to 161 are linker; the sequence is VQSFVSKGNNDSWDVEDESPEQFIDRTVTPPPVRRNIPMKSVPVAEKTAQIITPFSSE. N-linked (GlcNAc...) asparagine glycosylation is present at Asn-113. The interval 162 to 574 is catalytic; it reads DDEVVIKSVV…YNRSCKDVTK (413 aa). Glu-256 functions as the Charge relay system in the catalytic mechanism. Asn-320 carries N-linked (GlcNAc...) asparagine glycosylation. The active-site Charge relay system is the Lys-388. Asn-433 carries N-linked (GlcNAc...) asparagine glycosylation. The active-site Charge relay system is the Asp-464. His-562 (proton donor) is an active-site residue. An N-linked (GlcNAc...) asparagine glycan is attached at Asn-566.

The protein belongs to the HMG-CoA reductase family. Expressed in mature petals and anthers.

The protein resides in the endoplasmic reticulum membrane. It carries out the reaction (R)-mevalonate + 2 NADP(+) + CoA = (3S)-3-hydroxy-3-methylglutaryl-CoA + 2 NADPH + 2 H(+). Its pathway is metabolic intermediate biosynthesis; (R)-mevalonate biosynthesis; (R)-mevalonate from acetyl-CoA: step 3/3. Its function is as follows. Catalyzes the synthesis of mevalonate. The specific precursor of all isoprenoid compounds present in plants. The polypeptide is 3-hydroxy-3-methylglutaryl-coenzyme A reductase 3 (HMG3) (Solanum tuberosum (Potato)).